Reading from the N-terminus, the 138-residue chain is Acidic phospholipase A2 5 (138 aa).

A signal peptide spans 1-16 (MRTLWIVAVWLIGVEG). 7 disulfides stabilise this stretch: C42-C131, C44-C60, C59-C111, C65-C138, C66-C104, C73-C97, and C91-C102. Residues Y43, G45, and G47 each contribute to the Ca(2+) site. H63 is a catalytic residue. D64 is a Ca(2+) binding site. Residue D105 is part of the active site.

Belongs to the phospholipase A2 family. Group II subfamily. D49 sub-subfamily. Ca(2+) is required as a cofactor. As to expression, expressed by the venom gland.

It localises to the secreted. It carries out the reaction a 1,2-diacyl-sn-glycero-3-phosphocholine + H2O = a 1-acyl-sn-glycero-3-phosphocholine + a fatty acid + H(+). Functionally, PLA2 catalyzes the calcium-dependent hydrolysis of the 2-acyl groups in 3-sn-phosphoglycerides. This Echis ocellatus (Ocellated saw-scaled viper) protein is Acidic phospholipase A2 5.